Consider the following 527-residue polypeptide: Putative pumilio homolog 13 (527 aa).

Positions 22–51 (ENMTTAASSSQSQPPQMQSSKFHQPENHIH) are disordered. Low complexity predominate over residues 24–41 (MTTAASSSQSQPPQMQSS). In terms of domain architecture, PUM-HD spans 184–527 (GVNNSWRSNE…GNKILEKLNI (344 aa)). Pumilio repeat units follow at residues 205–243 (SMENGRGSYFSIATDRVWSKELEKTIFVGTKETIDMIFD), 244–279 (GLIVGICELMVDPFGNDVVKLLIGKCSSEQIILIVD), 283–321 (RHISKFVNICFNPIGTLAIQVLLTSIHERANNQIPRIMD), 322–357 (AISSVALQLTRNTNAKYVILACFRMFTSSQCRRLLE), 358–396 (VVSQHCYQIAIDQNGCCLLQQCFDKERVPNHEIRQRLIS), 397–432 (EVIEHALKLCLNCHGNYVVQYVVELDNQHETDLLVN), 433–468 (KLLRNYAHLARNKYGSHVVQKLLKLRGIDSKLIVVD), and 469–503 (LLRGIDTLLLDPFGNYVIQTAWFVSKEDVRQMLRY).

The protein resides in the cytoplasm. Its function is as follows. Sequence-specific RNA-binding protein that regulates translation and mRNA stability by binding the 3'-UTR of target mRNAs. This chain is Putative pumilio homolog 13 (APUM13), found in Arabidopsis thaliana (Mouse-ear cress).